The primary structure comprises 471 residues: MENRGIYYIDFGTQAQFIEEIEKMNSEYYFKNGKNKTYHIITYGCQMNVHDSEKLAGMLNAMGYVETQNLEEADLIIFNTCAVREHAESRVYGNIGPLKRLKDKKPELIIGVCGCMPQQLEVAQKLAKVFPFLDIIFGTKSLHKFPQLLYKAITTKKTVIDVAEDEDVVVEGIPTARREGVSAFVNIIYGCNNFCSYCIVPYVRGRERSRRPEEIIFEIQQLAANGVKEVTLLGQNVNSYGKDLPDGIPFYKLLEKVNAIEGIERIRFVTSHPKDLSDELIFAMRDLEKVCEHIHLPVQSGSTRILRQMNRHYTKEDYLRLVEKLKENIPDIAITTDIIVGFPGETEEDFEDTLDVVRKVEFDSAYTFIYSKRKGTKAAQMPNQVPDEVKHERFQRLVKLVEEIALKKNQQMLGKVCEILIDGYSKRNNLLEGRTRTNKVVNVKCSDEFMYKFVNVKILEASRHWLYGEVI.

An MTTase N-terminal domain is found at 36–154 (KTYHIITYGC…FPQLLYKAIT (119 aa)). 6 residues coordinate [4Fe-4S] cluster: Cys45, Cys81, Cys115, Cys191, Cys195, and Cys198. In terms of domain architecture, Radical SAM core spans 177-407 (RREGVSAFVN…VKLVEEIALK (231 aa)). The region spanning 410 to 471 (QQMLGKVCEI…SRHWLYGEVI (62 aa)) is the TRAM domain.

This sequence belongs to the methylthiotransferase family. MiaB subfamily. In terms of assembly, monomer. The cofactor is [4Fe-4S] cluster.

Its subcellular location is the cytoplasm. The catalysed reaction is N(6)-dimethylallyladenosine(37) in tRNA + (sulfur carrier)-SH + AH2 + 2 S-adenosyl-L-methionine = 2-methylsulfanyl-N(6)-dimethylallyladenosine(37) in tRNA + (sulfur carrier)-H + 5'-deoxyadenosine + L-methionine + A + S-adenosyl-L-homocysteine + 2 H(+). Catalyzes the methylthiolation of N6-(dimethylallyl)adenosine (i(6)A), leading to the formation of 2-methylthio-N6-(dimethylallyl)adenosine (ms(2)i(6)A) at position 37 in tRNAs that read codons beginning with uridine. This is tRNA-2-methylthio-N(6)-dimethylallyladenosine synthase from Caldicellulosiruptor saccharolyticus (strain ATCC 43494 / DSM 8903 / Tp8T 6331).